Reading from the N-terminus, the 175-residue chain is tRNA-acetylating toxin 3 (175 aa).

The acetyl-CoA site is built by Leu95, Val97, Gly103, Gly105, Gly107, Ala108, Asp133, Gln138, Asp141, and Trp142. The active site involves Tyr143. Acetyl-CoA contacts are provided by Gly145 and Phe146.

It belongs to the acetyltransferase family. GNAT subfamily. In terms of assembly, homodimer (in absence of antitoxin); has a condensed and elongated form. Forms a complex with cognate antitoxin TacA3. Forms a 4:2 antitoxin:toxin complex with cognate antitoxin TacA3. Forms a 4:4 antitoxin:toxin complex with promoter DNA, where 2 TacT3 dimers bridge 2 TacA3 dimers. Only TacA3 contacts promoter DNA in the octomeric form. TacT3 may contact DNA in the hexameric form.

The catalysed reaction is glycyl-tRNA(Gly) + acetyl-CoA = N-acetylglycyl-tRNA(Gly) + CoA + H(+). Functionally, toxic component of a type II toxin-antitoxin (TA) system. Acetylates tRNA and inhibits translation. Acetylates only Gly-tRNA on all 3 Gly-tRNA(Gly) isoacceptors in situ. In vitro acetylates mainly Ile/Leu and Gly. Overexpression during the lag phase of a tacA3-tacT3 deletion strain leads to a 150-fold increase in persister cells in the presence of cefotaxime and a non-growth state in the absence of antibiotic. Persister cell formation and the growth defect are neutralized by cognate antitoxin TacA3, but not by TacA1 or TacA2. Plays a role in persister cell formation. In terms of biological role, the TacA3-TacT3 complex both represses and derepresses expression of its own operon. The hexameric 4:2 TacA3-TacT3 complex binds promoter DNA and represses its transcription; both subunits are required. The octomeric 4:4 TacA3-TacT3 complex derepresses the operon. The shift from hexameric to octomeric complex probably alters DNA-binding, leading to dissociation from the operator DNA and derepression. This chain is tRNA-acetylating toxin 3, found in Salmonella typhimurium (strain 14028s / SGSC 2262).